The following is a 216-amino-acid chain: GTP cyclohydrolase 1 (216 aa).

Zn(2+)-binding residues include Cys-108, His-111, and Cys-179.

This sequence belongs to the GTP cyclohydrolase I family. Toroid-shaped homodecamer, composed of two pentamers of five dimers.

The enzyme catalyses GTP + H2O = 7,8-dihydroneopterin 3'-triphosphate + formate + H(+). The protein operates within cofactor biosynthesis; 7,8-dihydroneopterin triphosphate biosynthesis; 7,8-dihydroneopterin triphosphate from GTP: step 1/1. In Shewanella sp. (strain MR-7), this protein is GTP cyclohydrolase 1.